Reading from the N-terminus, the 575-residue chain is SH2B adapter protein 3 (575 aa).

3 disordered regions span residues 1–23 (MNGP…AAAP), 83–136 (RAPG…CSFQ), and 150–176 (SAGE…PARP). Ser-13 carries the phosphoserine modification. A compositionally biased stretch (basic and acidic residues) spans 83-93 (RAPGRDYRDTG). Positions 95–104 (GPPAKAEASP) are enriched in low complexity. 3 positions are modified to phosphoserine: Ser-103, Ser-120, and Ser-150. Low complexity predominate over residues 152–174 (GELPAAHTAAAPGTPGEAAETPA). In terms of domain architecture, PH spans 194–307 (EALKEAVLRY…WMAELSECTG (114 aa)). The segment at 322–346 (ALEPSTSSSPRGSTDSLNQGASPGG) is disordered. A compositionally biased stretch (low complexity) spans 325-337 (PSTSSSPRGSTDS). Phosphoserine is present on Ser-330. Positions 364 to 462 (WFHGPISRVK…ACDVRLSSYV (99 aa)) constitute an SH2 domain. Disordered stretches follow at residues 503–525 (SSGC…PEQI) and 546–575 (PVNR…YTPL).

Belongs to the SH2B adapter family. Binds to the tyrosine-phosphorylated TCR zeta chain via its SH2 domain. In terms of processing, tyrosine phosphorylated by LCK. Preferentially expressed by lymphoid cell lines.

Links T-cell receptor activation signal to phospholipase C-gamma-1, GRB2 and phosphatidylinositol 3-kinase. This chain is SH2B adapter protein 3 (SH2B3), found in Homo sapiens (Human).